Reading from the N-terminus, the 267-residue chain is 5'-methylthioadenosine nucleosidase (267 aa).

The active-site Proton acceptor is the E38. Residues T116, 199 to 202 (KDME), and D225 each bind S-methyl-5'-thioadenosine. Adenine contacts are provided by K199 and D225. The Proton donor role is filled by D225.

The protein belongs to the PNP/UDP phosphorylase family. MtnN subfamily. Homodimer. Interacts with CBL3 in a calcium-dependent manner. As to expression, expressed in roots, leaves, stems, cauline leaves and flowers.

It carries out the reaction S-methyl-5'-thioadenosine + H2O = 5-(methylsulfanyl)-D-ribose + adenine. The protein operates within amino-acid biosynthesis; L-methionine biosynthesis via salvage pathway; S-methyl-5-thio-alpha-D-ribose 1-phosphate from S-methyl-5'-thioadenosine (hydrolase route): step 1/2. Inhibited by CBL3 in a calcium-dependent manner. Inhibited by 5'-methylthiotubercidin (MTT) and by formycin A (FMA). Functionally, enzyme of the methionine cycle that catalyzes the irreversible cleavage of the glycosidic bond in 5'-methylthioadenosine (MTA) to adenine and 5'-methylthioribose. Contributes to the maintenance of AdoMet homeostasis and is required to sustain high rates of ethylene synthesis. Inactive towards S-adenosylhomocysteine (SAH/AdoHcy). This chain is 5'-methylthioadenosine nucleosidase (MTN1), found in Arabidopsis thaliana (Mouse-ear cress).